We begin with the raw amino-acid sequence, 619 residues long: 2-isopropylmalate synthase (619 aa).

The Pyruvate carboxyltransferase domain occupies 61-336 (PRWLSTDLRD…SPNLDFSDLT (276 aa)). 4 residues coordinate a divalent metal cation: aspartate 70, histidine 275, histidine 277, and asparagine 311.

The protein belongs to the alpha-IPM synthase/homocitrate synthase family. LeuA type 2 subfamily. Homodimer. The cofactor is a divalent metal cation.

Its subcellular location is the cytoplasm. It localises to the mitochondrion. It carries out the reaction 3-methyl-2-oxobutanoate + acetyl-CoA + H2O = (2S)-2-isopropylmalate + CoA + H(+). The protein operates within amino-acid biosynthesis; L-leucine biosynthesis; L-leucine from 3-methyl-2-oxobutanoate: step 1/4. Functionally, catalyzes the condensation of the acetyl group of acetyl-CoA with 3-methyl-2-oxobutanoate (2-oxoisovalerate) to form 3-carboxy-3-hydroxy-4-methylpentanoate (2-isopropylmalate). In Saccharomyces cerevisiae (strain ATCC 204508 / S288c) (Baker's yeast), this protein is 2-isopropylmalate synthase (LEU4).